A 157-amino-acid chain; its full sequence is uncharacterized protein (157 aa).

This is an uncharacterized protein from Caenorhabditis elegans.